Reading from the N-terminus, the 84-residue chain is Putative membrane protein insertion efficiency factor (84 aa).

This sequence belongs to the UPF0161 family.

It is found in the cell inner membrane. Could be involved in insertion of integral membrane proteins into the membrane. This is Putative membrane protein insertion efficiency factor from Shewanella halifaxensis (strain HAW-EB4).